The primary structure comprises 434 residues: MKSSPGLHIIIVGAGITGLATATSLRRAGHTVHLYEKSAQDNEIGAAIYVPPNVSQFLLPWGLDLDKWGFVKSQKVSFLHHASLETKMTLSDGMTAKGLTGAELYYAHRVDLHGCLRWMATRPEGPGRPATIHLMSNVVAYDPLAPSITLASGEVISADVVIGADGVRSDAVEAIIGDKVQTMRPRFANTCYRFLVPADAIEADPATQFWNEGSDGWSRVMIESVTGRSVVSYPCRSNTIHNFVLINNEENDTNMCAEDWHARFKIPDILKKFSDYDPRLLKVLSKAPDARRWPLIYRKPIHQWTKGCMTLAGDACHAMLPFLAQGGAQGIEDAVALGVVLQGATTRDDIQKRLQIYQEVRMKRASIIQILSNMGADHSVSVEDLKEYLNEDQMPYSQHDMMIHNYKYDVAEVAFEAMKRYDPSFRLGNDFLGR.

Positions 1–22 are cleaved as a signal peptide; it reads MKSSPGLHIIIVGAGITGLATA. Glu-36 contacts FAD. Residues Arg-193 and Tyr-233 contribute to the active site. FAD is bound by residues Asp-314 and Gly-327.

Belongs to the paxM FAD-dependent monooxygenase family. As to quaternary structure, monomer. The cofactor is FAD.

The protein operates within secondary metabolite biosynthesis; flavonoid biosynthesis. Monooxygenase; part of the gene cluster that mediates the biosynthesis of chlorflavonin, a fungal flavonoid with acetolactate synthase inhibitory activity. Within the pathway, cfoG is responsible for the hydroxylation of the flavonoid skeleton at position C8. The pathway begins with the PKS-NRPS hybrid synthetase cfoA that uses benzoic acid or p-hydroxybenzoic acid as a starter unit with four rounds of chain elongation using malonyl-CoA to form the chalcone skeleton. Then, a new type of chalcone isomerase, cfoK, catalyzes the conversion of the chalcone into a flavanone by a histidine-mediated oxa-Michael addition mechanism. The desaturation of flavanone to flavone is catalyzed by a new type of flavone synthase, the flavin mononucleotide (FMN)-dependent oxidoreductase cfoJ. Monooxygenases cfoF, cfoG, and P450 cfoH are responsible for the hydroxylation of the flavonoid skeleton at sites C3, C8, and C2', respectively. Like cfoF, the dehydratase cfoI plays also a role in the hydroxylation of position C3. Methyltransferases cfoB, cfoC, and cfoD then catalyze the methylation of C7-OH, C8-OH, and C3-OH, respectively. Finally, the monooxygenase cfoE is responsible for the chlorination of flavonoid at position C3'. The protein is FAD-dependent monooxygenase cfoG of Aspergillus candidus.